Reading from the N-terminus, the 1083-residue chain is MDKSSKPTIRLLFATKGCAISHSLLLLTGQISTEPLYVVSYTWTPDLDDVFVKNGREEITQVIPTKRPREVTENDEENQIMHLFCSRDVNVIFYLIGGFSTGDVRSRVWPIFFCCFKTQTDFKALYKALWYGAPLNPHIISDTLCISETFDIHSEVIQTLMVTTHHLNRKGLSDNGLCITEATLCKLVKKSVGRQELTSLYAHYERQVLAAYRRLYWGYGCSPFWYIVRFGPSEKTLVLATRYYLLQTDTSYNTLETPLYDLQAIKDLFLTYQVPALPNCSGYNISDLLSFDKLSMFCCSSTYTRGLTAKNALSYILQRIHTDTTEIHAVSEYITNDRKGLKVPDREFVDYIYLAHFECFNRKQIADHLQAVTYSDFVNKPVLLKSSNLGKRATANFFNHVRSRLNMRDYIKKNVICDVTELGPEIGHKYTITKTYTLSLTYAAKPSKFIGVCDLATTLTRRVENIEKQFSPYGWSSTIPSNPPGFDELSNFEDSGVSAEALRAANFANDTPNQSGRTGFDTSPGITKLLLFFSAATGIATHDVSILSYKTPLEALIGHSEVTGPMPVYRVALPHGAQAFAVIANDTWSSITNRYTLPHEARLIAEDLKQINPCNFVAASLRDMQLTLLLSTSVKNVSKISSNIPKDQLYINRNELFNTNLIITNLILDVDFHIRKPIPLGILHAGMRAFRHGILTAMQLLFPKAVVNPNKDPCYFYKTACPEPTVEVLDDDNLLDITSHSDIDFYIENGELYTCVEENYTEDVWFFDTQTTSEVHTHADVSNNENLHETLPCNCKEKIGFRVCVPIPNPYALVGSSTLKGFAQILQQAVLLEREFVEYIGPYLRDFSFIDTGVYSHGHSLRLPFFSKVTTTGTAVGQLLPFYVVPEQCIDILAFVTSHRNPANFHFHSRPQSNVPVQFILHNLGGEYAEFFERKVARNKQIFSSPQISLTKALKERGVTCLDAFTLEAFVDSTILESIVEHIAVHFPGRDREYTLTSSKCIAIKRDWVLFQLICGTKGFTCLRYPHRGGRTAPRTFVSLRVDHHNRLCISLAQQCFATKCDSNRMHTIFTLEVPNYPNLTSS.

A CHC2-type zinc finger spans residues 1022–1061 (CLRYPHRGGRTAPRTFVSLRVDHHNRLCISLAQQCFATKC).

This sequence belongs to the herpesviridae DNA primase family. Associates with the helicase and the primase-associated factor to form the helicase-primase factor.

It is found in the host nucleus. In terms of biological role, essential component of the helicase/primase complex. Unwinds the DNA at the replication forks and generates single-stranded DNA for both leading and lagging strand synthesis. The primase initiates primer synthesis and thereby produces large amount of short RNA primers on the lagging strand that the polymerase elongates using dNTPs. The polypeptide is DNA primase (Homo sapiens (Human)).